Reading from the N-terminus, the 273-residue chain is Phosphatidylglycerol--prolipoprotein diacylglyceryl transferase (273 aa).

The next 7 membrane-spanning stretches (helical) occupy residues 21–41 (ISVRWYGLMYLVGFMFALWLA), 60–80 (LLFAGFLGVVLGGRIGYVLFY), 95–115 (VWTGGMSFHGGLLGVITAMLW), 124–144 (FFGVADMIAPLVPFGLGMGRM), 176–196 (SQLYEMALEGIVLFFILNWFI), 203–223 (GSVSGLFLAGYGTFRFLVEYV), and 236–256 (FISMGQILSLPMVIIGVLMMV). R143 is a binding site for a 1,2-diacyl-sn-glycero-3-phospho-(1'-sn-glycerol).

It belongs to the Lgt family.

The protein localises to the cell inner membrane. It carries out the reaction L-cysteinyl-[prolipoprotein] + a 1,2-diacyl-sn-glycero-3-phospho-(1'-sn-glycerol) = an S-1,2-diacyl-sn-glyceryl-L-cysteinyl-[prolipoprotein] + sn-glycerol 1-phosphate + H(+). It participates in protein modification; lipoprotein biosynthesis (diacylglyceryl transfer). In terms of biological role, catalyzes the transfer of the diacylglyceryl group from phosphatidylglycerol to the sulfhydryl group of the N-terminal cysteine of a prolipoprotein, the first step in the formation of mature lipoproteins. The protein is Phosphatidylglycerol--prolipoprotein diacylglyceryl transferase of Vibrio atlanticus (strain LGP32) (Vibrio splendidus (strain Mel32)).